We begin with the raw amino-acid sequence, 208 residues long: ATP synthase subunit beta, chloroplastic (208 aa).

It belongs to the ATPase alpha/beta chains family. In terms of assembly, F-type ATPases have 2 components, CF(1) - the catalytic core - and CF(0) - the membrane proton channel. CF(1) has five subunits: alpha(3), beta(3), gamma(1), delta(1), epsilon(1). CF(0) has four main subunits: a(1), b(1), b'(1) and c(9-12).

It is found in the plastid. The protein localises to the chloroplast thylakoid membrane. The catalysed reaction is ATP + H2O + 4 H(+)(in) = ADP + phosphate + 5 H(+)(out). In terms of biological role, produces ATP from ADP in the presence of a proton gradient across the membrane. The catalytic sites are hosted primarily by the beta subunits. In Hypolepis hostilis (Fern), this protein is ATP synthase subunit beta, chloroplastic (atpB).